Here is a 360-residue protein sequence, read N- to C-terminus: Probable protein phosphatase 2C 54 (360 aa).

The disordered stretch occupies residues Met-1–Arg-39. The region spanning Arg-65–Phe-325 is the PPM-type phosphatase domain. Asp-109, Gly-110, Asp-273, and Asp-316 together coordinate Mn(2+).

The protein belongs to the PP2C family. Mg(2+) is required as a cofactor. Requires Mn(2+) as cofactor.

The catalysed reaction is O-phospho-L-seryl-[protein] + H2O = L-seryl-[protein] + phosphate. It carries out the reaction O-phospho-L-threonyl-[protein] + H2O = L-threonyl-[protein] + phosphate. This chain is Probable protein phosphatase 2C 54, found in Oryza sativa subsp. japonica (Rice).